Reading from the N-terminus, the 461-residue chain is tRNA modification GTPase MnmE (461 aa).

R23, E88, and R127 together coordinate (6S)-5-formyl-5,6,7,8-tetrahydrofolate. The TrmE-type G domain occupies 223–382 (GLNTVIVGKP…VEEALVEIVY (160 aa)). Residue N233 participates in K(+) binding. GTP is bound by residues 233–238 (NVGKSS), 252–258 (TEVPGTT), and 277–280 (DTAG). S237 is a binding site for Mg(2+). Residues T252, V254, and T257 each contribute to the K(+) site. T258 contributes to the Mg(2+) binding site. K461 is a (6S)-5-formyl-5,6,7,8-tetrahydrofolate binding site.

It belongs to the TRAFAC class TrmE-Era-EngA-EngB-Septin-like GTPase superfamily. TrmE GTPase family. As to quaternary structure, homodimer. Heterotetramer of two MnmE and two MnmG subunits. K(+) is required as a cofactor.

It localises to the cytoplasm. Functionally, exhibits a very high intrinsic GTPase hydrolysis rate. Involved in the addition of a carboxymethylaminomethyl (cmnm) group at the wobble position (U34) of certain tRNAs, forming tRNA-cmnm(5)s(2)U34. This Alkaliphilus metalliredigens (strain QYMF) protein is tRNA modification GTPase MnmE.